Reading from the N-terminus, the 619-residue chain is MSGARRCGDRRSERSSVVGDNRNGYVETDPTGRYGRLSEVLGKGAMKTVYRGFDELRGVEVAWNQATISDVLRTPDALHRMYAEVSLLADLRHDAIIAFHASWVHPSRRTFNFITELFSSGTLRSYRLRYPRVSRRAVAAWARAILRGLAYLHSRGVIHRDLKCDNIFVNGHLGQVKIGDLGLAAVLRGCTSARSVIGTPEFMAPEMYDECYGVGVDVYSFGMCMLEMLTNEYPYSECDNPAQIYKKVTAGKLPDAFYLLTDADARRFIGRCLVDAAHRPSAEELLLDPFLSPPQNHDDHNTIAHATAPPPPLPLACSNSSEEQEEEEAPAAKTTGMAITGKLNKEHDTIFLKVQIGGGGNVRNIYFPFDVANDTAMEVATEMVKELDIADREPTEIAAMIEQEIVRLVPGYKQHEYSYADDDDDDDVNGQPNPFYYLSSSPTSSQGSLCGVGPTSSEGFPGPHGKVDWSRDYCYYPPSSVSVSDDDDSSTSSLSAAVSAISLQQQHCSASSSRLGPASASASEDGGGHAGRPRQREGEEERRRRRMSRNRSMVDMRSQLLHRTLVEELNKRLFFNTVGAVHDIGFRDPTTYGSSSSSSSSQHRRRSSSKVDHKHHYMF.

The segment covering 1 to 14 (MSGARRCGDRRSER) has biased composition (basic and acidic residues). The tract at residues 1 to 30 (MSGARRCGDRRSERSSVVGDNRNGYVETDP) is disordered. The 257-residue stretch at 35-291 (GRLSEVLGKG…AEELLLDPFL (257 aa)) folds into the Protein kinase domain. ATP contacts are provided by residues 115–118 (TELF) and K163. The Proton acceptor role is filled by D180. Disordered stretches follow at residues 293-335 (PPQN…AKTT), 419-464 (YADD…PGPH), 508-555 (CSAS…SMVD), and 585-619 (GFRD…HYMF). Over residues 419-428 (YADDDDDDDV) the composition is skewed to acidic residues. Positions 439–448 (SSSPTSSQGS) are enriched in low complexity. The segment covering 602–619 (QHRRRSSSKVDHKHHYMF) has biased composition (basic residues).

The protein belongs to the protein kinase superfamily. Ser/Thr protein kinase family. WNK subfamily.

The enzyme catalyses L-seryl-[protein] + ATP = O-phospho-L-seryl-[protein] + ADP + H(+). It carries out the reaction L-threonyl-[protein] + ATP = O-phospho-L-threonyl-[protein] + ADP + H(+). The protein is Probable serine/threonine-protein kinase WNK8 (WNK8) of Oryza sativa subsp. japonica (Rice).